The sequence spans 887 residues: DNA mismatch repair protein MutS (887 aa).

626-633 (GPNMAGKS) is an ATP binding site.

Belongs to the DNA mismatch repair MutS family.

This protein is involved in the repair of mismatches in DNA. It is possible that it carries out the mismatch recognition step. This protein has a weak ATPase activity. The chain is DNA mismatch repair protein MutS from Methanococcoides burtonii (strain DSM 6242 / NBRC 107633 / OCM 468 / ACE-M).